The primary structure comprises 119 residues: MHRLTLPKSARLLKRKQFVYVQRCGQYCRTDQATLRIVPSRHSNIRKVGVTVSKKFGKAHQRNRFKRIVREAFRHVRPNLPACQVVVSPKGGTLPNFGKLSADLLKHIPEALPLVTSSK.

Belongs to the RnpA family. As to quaternary structure, consists of a catalytic RNA component (M1 or rnpB) and a protein subunit.

It carries out the reaction Endonucleolytic cleavage of RNA, removing 5'-extranucleotides from tRNA precursor.. Its function is as follows. RNaseP catalyzes the removal of the 5'-leader sequence from pre-tRNA to produce the mature 5'-terminus. It can also cleave other RNA substrates such as 4.5S RNA. The protein component plays an auxiliary but essential role in vivo by binding to the 5'-leader sequence and broadening the substrate specificity of the ribozyme. This Chlamydia muridarum (strain MoPn / Nigg) protein is Ribonuclease P protein component.